The sequence spans 454 residues: Asparagine--tRNA ligase (454 aa).

It belongs to the class-II aminoacyl-tRNA synthetase family. In terms of assembly, homodimer.

The protein localises to the cytoplasm. The catalysed reaction is tRNA(Asn) + L-asparagine + ATP = L-asparaginyl-tRNA(Asn) + AMP + diphosphate + H(+). This is Asparagine--tRNA ligase from Ureaplasma parvum serovar 3 (strain ATCC 27815 / 27 / NCTC 11736).